The sequence spans 258 residues: uncharacterized protein (258 aa).

An N-terminal signal peptide occupies residues 1 to 20 (MKCFQKLYIFILILIVLMAG). C21 is lipidated: N-palmitoyl cysteine. The S-diacylglycerol cysteine moiety is linked to residue C21.

The protein belongs to the staphylococcal tandem lipoprotein family.

It localises to the cell membrane. This is an uncharacterized protein from Staphylococcus aureus (strain bovine RF122 / ET3-1).